The primary structure comprises 174 residues: Crossover junction endodeoxyribonuclease RuvC (174 aa).

Residues Asp8, Glu67, and Asp139 contribute to the active site. Mg(2+) contacts are provided by Asp8, Glu67, and Asp139.

It belongs to the RuvC family. As to quaternary structure, homodimer which binds Holliday junction (HJ) DNA. The HJ becomes 2-fold symmetrical on binding to RuvC with unstacked arms; it has a different conformation from HJ DNA in complex with RuvA. In the full resolvosome a probable DNA-RuvA(4)-RuvB(12)-RuvC(2) complex forms which resolves the HJ. Mg(2+) is required as a cofactor.

It is found in the cytoplasm. It carries out the reaction Endonucleolytic cleavage at a junction such as a reciprocal single-stranded crossover between two homologous DNA duplexes (Holliday junction).. Its function is as follows. The RuvA-RuvB-RuvC complex processes Holliday junction (HJ) DNA during genetic recombination and DNA repair. Endonuclease that resolves HJ intermediates. Cleaves cruciform DNA by making single-stranded nicks across the HJ at symmetrical positions within the homologous arms, yielding a 5'-phosphate and a 3'-hydroxyl group; requires a central core of homology in the junction. The consensus cleavage sequence is 5'-(A/T)TT(C/G)-3'. Cleavage occurs on the 3'-side of the TT dinucleotide at the point of strand exchange. HJ branch migration catalyzed by RuvA-RuvB allows RuvC to scan DNA until it finds its consensus sequence, where it cleaves and resolves the cruciform DNA. The sequence is that of Crossover junction endodeoxyribonuclease RuvC from Ectopseudomonas mendocina (strain ymp) (Pseudomonas mendocina).